We begin with the raw amino-acid sequence, 160 residues long: Ribosomal RNA large subunit methyltransferase H (160 aa).

S-adenosyl-L-methionine-binding positions include L76, G108, and 127-132 (LGKMTW).

Belongs to the RNA methyltransferase RlmH family. In terms of assembly, homodimer.

The protein localises to the cytoplasm. The enzyme catalyses pseudouridine(1915) in 23S rRNA + S-adenosyl-L-methionine = N(3)-methylpseudouridine(1915) in 23S rRNA + S-adenosyl-L-homocysteine + H(+). In terms of biological role, specifically methylates the pseudouridine at position 1915 (m3Psi1915) in 23S rRNA. The polypeptide is Ribosomal RNA large subunit methyltransferase H (Rhizobium rhizogenes (strain K84 / ATCC BAA-868) (Agrobacterium radiobacter)).